The primary structure comprises 407 residues: Serine/threonine transporter SstT (407 aa).

9 helical membrane passes run 12-32 (GNLI…GISS), 42-62 (LGIL…FILI), 81-101 (IIIL…LANF), 141-161 (ALSS…GIAL), 179-199 (VLKI…GLVA), 218-238 (ILLV…IVFF), 245-267 (FPLI…SSAA), 288-308 (ISIP…IAIL), and 330-350 (IIAT…LLLI).

This sequence belongs to the dicarboxylate/amino acid:cation symporter (DAACS) (TC 2.A.23) family.

The protein resides in the cell inner membrane. The enzyme catalyses L-serine(in) + Na(+)(in) = L-serine(out) + Na(+)(out). It catalyses the reaction L-threonine(in) + Na(+)(in) = L-threonine(out) + Na(+)(out). Involved in the import of serine and threonine into the cell, with the concomitant import of sodium (symport system). The polypeptide is Serine/threonine transporter SstT (Campylobacter jejuni subsp. jejuni serotype O:23/36 (strain 81-176)).